A 204-amino-acid polypeptide reads, in one-letter code: Ras-related protein Rab-7L1 (204 aa).

GTP contacts are provided by Ser-33, Lys-34, His-35, Tyr-36, Lys-37, and Thr-39. An Effector region motif is present at residues 36 to 44; the sequence is YKSTVGVDF. A Phosphothreonine; by LRRK2 modification is found at Thr-71. The residue at position 72 (Ser-72) is a Phosphoserine. GTP-binding residues include Lys-126, Val-156, and Lys-157. 2 S-geranylgeranyl cysteine lipidation sites follow: Cys-203 and Cys-204.

This sequence belongs to the small GTPase superfamily. Rab family. Interacts with LRRK2 (via the N-terminus); this interaction is direct and stimulates kinase activity.

The protein resides in the cell membrane. The protein localises to the cytoplasm. Its subcellular location is the perinuclear region. It localises to the golgi apparatus. It is found in the golgi apparatus membrane. The protein resides in the trans-Golgi network. The protein localises to the cytoskeleton. In terms of biological role, the small GTPases Rab are key regulators in vesicle trafficking. Essential for maintaining the integrity of endosome-trans-Golgi network structure. Together with LRRK2, plays a role in the retrograde trafficking pathway for recycling proteins, such as mannose 6 phosphate receptor (M6PR), between lysosomes and the Golgi apparatus in a retromer-dependent manner. Recruits LRRK2 to the Golgi apparatus and stimulates LRRK2 kinase activity. Stimulates phosphorylation of RAB10 'Thr-73' by LRRK2. Also regulates neuronal process morphology in the intact central nervous system (CNS). The polypeptide is Ras-related protein Rab-7L1 (Rab29) (Mus musculus (Mouse)).